The following is a 103-amino-acid chain: Large ribosomal subunit protein uL24 (103 aa).

Belongs to the universal ribosomal protein uL24 family. As to quaternary structure, part of the 50S ribosomal subunit.

Its function is as follows. One of two assembly initiator proteins, it binds directly to the 5'-end of the 23S rRNA, where it nucleates assembly of the 50S subunit. In terms of biological role, one of the proteins that surrounds the polypeptide exit tunnel on the outside of the subunit. The polypeptide is Large ribosomal subunit protein uL24 (Enterococcus faecalis (strain ATCC 700802 / V583)).